The chain runs to 471 residues: Argininosuccinate lyase (471 aa).

The protein belongs to the lyase 1 family. Argininosuccinate lyase subfamily.

The protein localises to the cytoplasm. It catalyses the reaction 2-(N(omega)-L-arginino)succinate = fumarate + L-arginine. It participates in amino-acid biosynthesis; L-arginine biosynthesis; L-arginine from L-ornithine and carbamoyl phosphate: step 3/3. The protein is Argininosuccinate lyase of Cereibacter sphaeroides (strain ATCC 17023 / DSM 158 / JCM 6121 / CCUG 31486 / LMG 2827 / NBRC 12203 / NCIMB 8253 / ATH 2.4.1.) (Rhodobacter sphaeroides).